A 264-amino-acid chain; its full sequence is Type III pantothenate kinase (264 aa).

6–13 (DVGNTNIK) contributes to the ATP binding site. Residue 108 to 111 (GSDR) coordinates substrate. The active-site Proton acceptor is D110. ATP is bound at residue T134.

This sequence belongs to the type III pantothenate kinase family. As to quaternary structure, homodimer. Requires NH4(+) as cofactor. The cofactor is K(+).

The protein localises to the cytoplasm. The enzyme catalyses (R)-pantothenate + ATP = (R)-4'-phosphopantothenate + ADP + H(+). It participates in cofactor biosynthesis; coenzyme A biosynthesis; CoA from (R)-pantothenate: step 1/5. Functionally, catalyzes the phosphorylation of pantothenate (Pan), the first step in CoA biosynthesis. This Ehrlichia canis (strain Jake) protein is Type III pantothenate kinase.